The chain runs to 278 residues: 4-diphosphocytidyl-2-C-methyl-D-erythritol kinase (278 aa).

K9 is an active-site residue. P89–A99 is a binding site for ATP. D128 is a catalytic residue.

This sequence belongs to the GHMP kinase family. IspE subfamily.

It carries out the reaction 4-CDP-2-C-methyl-D-erythritol + ATP = 4-CDP-2-C-methyl-D-erythritol 2-phosphate + ADP + H(+). Its pathway is isoprenoid biosynthesis; isopentenyl diphosphate biosynthesis via DXP pathway; isopentenyl diphosphate from 1-deoxy-D-xylulose 5-phosphate: step 3/6. Functionally, catalyzes the phosphorylation of the position 2 hydroxy group of 4-diphosphocytidyl-2C-methyl-D-erythritol. The sequence is that of 4-diphosphocytidyl-2-C-methyl-D-erythritol kinase from Cereibacter sphaeroides (strain KD131 / KCTC 12085) (Rhodobacter sphaeroides).